The following is an 879-amino-acid chain: MKQLSSAEVRQLFLDFFKEKGHTIEPSAPLVPNNDPTILWINSGVATMKKYFDGSVIPDNPRMANAQKSIRTNDIENVGKTARHHTFFEMLGNFSIGDYFKEGAILFAWEFLTSPKWIGFDPDKLYVTVYPEDEEAKTLWREKIGLSEDHIVEIEDNFWDIGIGPSGPDSEIFYDRGPAFGDDESDPELYPGGENERYLEIWNLVFSQFNHNPDGTYTPLPKQNIDTGMGLERMVSIIQDAPTNFETDLFMPIIREVEQISGVKYGHSQENDVAFKVIADHIRTVAFAIGDGALPSNEGRGYILRRLLRRAVRYAKVLTINEPFMYKLVPVVGKIMNSFYPEVENQTDFIQKVIRTEEERFHETLNEGLAILETILKNAKETNEQTIKGADIFKLYDTFGFPVELTEEYAEDHGLKVDHAGFEAEMKEQRDRARSARADVKSMQVQGELLANLTDKSEFVGYNTTEHVSEILYLIQDDTLVDEVASGSEAQVIFKETPFYAESGGQVADKGTIESETGVAYVEDVQKAPNKQNLHRISVKEGVLKTGDTVKLAVDKVKRRETIKNHTATHLLHRALKDTLGEHVNQAGSLVSPDRLRFDFSHFGQITEEELTKMEEIVNEKIWEQINVIIEEMPIAEAKELGAMALFGEKYGEVVRVVQVGKYSIELCGGVHVRNTADIGLFKIVSETGIGAGTRRIEAVTGKEAYRFVTEQENTLKQTANLLKTTTKETPQKVEQLQADLREVRRENESLLSKLASAASADIFESPEEIGGVKVIAKQVNAKDMNQLRQFVDNWKDKKIGGVLVLGAVQGDKVNLISAVSEDAIKAGYHAGKLLKEVATRCGGNGGGRPDMAQAGGKNPAELGTALDYVSTWVKEQQA.

Residues His-566, His-570, Cys-668, and His-672 each coordinate Zn(2+).

This sequence belongs to the class-II aminoacyl-tRNA synthetase family. The cofactor is Zn(2+).

It localises to the cytoplasm. It catalyses the reaction tRNA(Ala) + L-alanine + ATP = L-alanyl-tRNA(Ala) + AMP + diphosphate. In terms of biological role, catalyzes the attachment of alanine to tRNA(Ala) in a two-step reaction: alanine is first activated by ATP to form Ala-AMP and then transferred to the acceptor end of tRNA(Ala). Also edits incorrectly charged Ser-tRNA(Ala) and Gly-tRNA(Ala) via its editing domain. In Listeria innocua serovar 6a (strain ATCC BAA-680 / CLIP 11262), this protein is Alanine--tRNA ligase.